The chain runs to 396 residues: Phosphopentomutase (396 aa).

Residues Asp13, Asp288, His293, Asp329, His330, and His341 each contribute to the Mn(2+) site.

Belongs to the phosphopentomutase family. Requires Mn(2+) as cofactor.

Its subcellular location is the cytoplasm. The catalysed reaction is 2-deoxy-alpha-D-ribose 1-phosphate = 2-deoxy-D-ribose 5-phosphate. The enzyme catalyses alpha-D-ribose 1-phosphate = D-ribose 5-phosphate. The protein operates within carbohydrate degradation; 2-deoxy-D-ribose 1-phosphate degradation; D-glyceraldehyde 3-phosphate and acetaldehyde from 2-deoxy-alpha-D-ribose 1-phosphate: step 1/2. Its function is as follows. Isomerase that catalyzes the conversion of deoxy-ribose 1-phosphate (dRib-1-P) and ribose 1-phosphate (Rib-1-P) to deoxy-ribose 5-phosphate (dRib-5-P) and ribose 5-phosphate (Rib-5-P), respectively. The chain is Phosphopentomutase from Clostridium perfringens (strain SM101 / Type A).